The chain runs to 166 residues: Phospholipase A2 inhibitor clone 04 (166 aa).

An N-terminal signal peptide occupies residues 1–19 (MRLILLSSLLLLGIFLANG). The C-type lectin domain occupies 46 to 161 (LKDAFLTVHR…CDDNRLVVCE (116 aa)). 2 disulfides stabilise this stretch: cysteine 83–cysteine 160 and cysteine 138–cysteine 152. Asparagine 122 is a glycosylation site (N-linked (GlcNAc...) asparagine).

It belongs to the alpha-type phospholipase A2 inhibitor family. In terms of assembly, homotrimer; non-covalently linked. As to expression, expressed by the liver.

It localises to the secreted. This phospholipase A2 inhibitor binds directly phospholipase A2 in the presence or absence of calcium. In Bothrops moojeni (Lance-headed viper), this protein is Phospholipase A2 inhibitor clone 04.